Here is a 647-residue protein sequence, read N- to C-terminus: DNA ligase (647 aa).

NAD(+)-binding positions include 30–34 (DEEYD), 79–80 (SM), and glutamate 105. Lysine 107 serves as the catalytic N6-AMP-lysine intermediate. NAD(+)-binding residues include arginine 128, glutamate 162, and lysine 301. Zn(2+) is bound by residues cysteine 395, cysteine 398, cysteine 411, and cysteine 416. The BRCT domain maps to 570 to 647 (KSDSVIFGKT…ESAFNELVKE (78 aa)).

Belongs to the NAD-dependent DNA ligase family. LigA subfamily. The cofactor is Mg(2+). Mn(2+) serves as cofactor.

It carries out the reaction NAD(+) + (deoxyribonucleotide)n-3'-hydroxyl + 5'-phospho-(deoxyribonucleotide)m = (deoxyribonucleotide)n+m + AMP + beta-nicotinamide D-nucleotide.. Its function is as follows. DNA ligase that catalyzes the formation of phosphodiester linkages between 5'-phosphoryl and 3'-hydroxyl groups in double-stranded DNA using NAD as a coenzyme and as the energy source for the reaction. It is essential for DNA replication and repair of damaged DNA. The polypeptide is DNA ligase (Campylobacter jejuni subsp. doylei (strain ATCC BAA-1458 / RM4099 / 269.97)).